A 207-amino-acid chain; its full sequence is Uracil phosphoribosyltransferase (207 aa).

Residues Arg-77, Arg-102, and 129 to 137 each bind 5-phospho-alpha-D-ribose 1-diphosphate; that span reads DPMLATGVS. Uracil is bound by residues Ile-192 and 197–199; that span reads GDA. Asp-198 contributes to the 5-phospho-alpha-D-ribose 1-diphosphate binding site.

This sequence belongs to the UPRTase family. The cofactor is Mg(2+).

The enzyme catalyses UMP + diphosphate = 5-phospho-alpha-D-ribose 1-diphosphate + uracil. Its pathway is pyrimidine metabolism; UMP biosynthesis via salvage pathway; UMP from uracil: step 1/1. Allosterically activated by GTP. Functionally, catalyzes the conversion of uracil and 5-phospho-alpha-D-ribose 1-diphosphate (PRPP) to UMP and diphosphate. This chain is Uracil phosphoribosyltransferase, found in Fervidobacterium nodosum (strain ATCC 35602 / DSM 5306 / Rt17-B1).